The following is a 217-amino-acid chain: 3,4-dihydroxy-2-butanone 4-phosphate synthase (217 aa).

Residues 37–38 (RE), Asp-42, 150–154 (RGGHT), and Glu-174 contribute to the D-ribulose 5-phosphate site. Residue Glu-38 coordinates Mg(2+). His-153 is a Mg(2+) binding site.

Belongs to the DHBP synthase family. As to quaternary structure, homodimer. Mg(2+) serves as cofactor. It depends on Mn(2+) as a cofactor.

It carries out the reaction D-ribulose 5-phosphate = (2S)-2-hydroxy-3-oxobutyl phosphate + formate + H(+). The protein operates within cofactor biosynthesis; riboflavin biosynthesis; 2-hydroxy-3-oxobutyl phosphate from D-ribulose 5-phosphate: step 1/1. Catalyzes the conversion of D-ribulose 5-phosphate to formate and 3,4-dihydroxy-2-butanone 4-phosphate. The chain is 3,4-dihydroxy-2-butanone 4-phosphate synthase from Klebsiella pneumoniae (strain 342).